The following is a 572-amino-acid chain: NADH-ubiquinone oxidoreductase chain 5 (572 aa).

A run of 16 helical transmembrane segments spans residues 4–24, 44–64, 86–106, 107–127, 147–167, 170–190, 217–237, 239–259, 268–288, 294–314, 337–357, 372–394, 422–442, 457–477, 490–510, and 552–572; these read ISFVNLISMSLSCFLLSLYFL, IVMTFLFDWMSLLFMSFVLMI, IMLVLMFVLSMMLLIISPNLI, SILLGWDGLGLVSYCLVIYFQ, VALLLSIAWMLNYGSWNYIFY, IMQNEFEMLMIGSLVMLAAMT, SSTLVTAGVYLLIRFNIILST, WLGQLMLLLSGLTMFMAGLGA, IIALSTLSQLGLMMSILSMGF, FHLLTHALFKALLFMCAGAII, SACFNVSNLALCGMPFLAGFY, NMFSFFLYYFSTGLTVSYSFRLV, MGLLIMSIIGGSMLNWLIFPF, LFVCIVGGLFGYLISLSNLFF, FLGSMWFMPYISTYGMIFYPL, and LKIYLLLFVFWILILLILLFL.

This sequence belongs to the complex I subunit 5 family.

The protein resides in the mitochondrion inner membrane. It carries out the reaction a ubiquinone + NADH + 5 H(+)(in) = a ubiquinol + NAD(+) + 4 H(+)(out). Core subunit of the mitochondrial membrane respiratory chain NADH dehydrogenase (Complex I) that is believed to belong to the minimal assembly required for catalysis. Complex I functions in the transfer of electrons from NADH to the respiratory chain. The immediate electron acceptor for the enzyme is believed to be ubiquinone. In Drosophila melanogaster (Fruit fly), this protein is NADH-ubiquinone oxidoreductase chain 5 (mt:ND5).